A 580-amino-acid polypeptide reads, in one-letter code: (3S,6E)-nerolidol synthase 1, chloroplastic (580 aa).

A chloroplast-targeting transit peptide spans 1 to 31 (MASSSWAFFKVFNPQIAPKSISHIGQSDLMQ). Positions 334, 338, 478, 482, and 486 each coordinate Mg(2+). The DDXXD motif signature appears at 334-338 (DDIFD).

This sequence belongs to the terpene synthase family. Tpsg subfamily. Requires Mg(2+) as cofactor. Mn(2+) serves as cofactor.

Its subcellular location is the plastid. It is found in the chloroplast. It carries out the reaction (2E,6E)-farnesyl diphosphate + H2O = (3S,6E)-nerolidol + diphosphate. It functions in the pathway secondary metabolite biosynthesis; terpenoid biosynthesis. Involved in monoterpene (C10) and sesquiterpene (C15) biosynthesis. Converts geranyl diphosphate (GPP) into S-linalool and farnesyl diphosphate (FPP) into (3S)-E-nerolidol. Probably not expressed in wild strawberry species. The chain is (3S,6E)-nerolidol synthase 1, chloroplastic from Fragaria vesca (Woodland strawberry).